Reading from the N-terminus, the 110-residue chain is Large ribosomal subunit protein uL22 (110 aa).

Belongs to the universal ribosomal protein uL22 family. As to quaternary structure, part of the 50S ribosomal subunit.

In terms of biological role, this protein binds specifically to 23S rRNA; its binding is stimulated by other ribosomal proteins, e.g. L4, L17, and L20. It is important during the early stages of 50S assembly. It makes multiple contacts with different domains of the 23S rRNA in the assembled 50S subunit and ribosome. Functionally, the globular domain of the protein is located near the polypeptide exit tunnel on the outside of the subunit, while an extended beta-hairpin is found that lines the wall of the exit tunnel in the center of the 70S ribosome. In Variovorax paradoxus (strain S110), this protein is Large ribosomal subunit protein uL22.